The sequence spans 126 residues: Methylglyoxal synthase (126 aa).

The MGS-like domain maps to 1 to 126 (MKALALIAHD…IAWIRKGTPQ (126 aa)). Substrate contacts are provided by residues His9, Lys13, 35–38 (TGTT), and 55–56 (SG). Asp61 functions as the Proton donor/acceptor in the catalytic mechanism. His88 provides a ligand contact to substrate.

The protein belongs to the methylglyoxal synthase family.

The catalysed reaction is dihydroxyacetone phosphate = methylglyoxal + phosphate. Catalyzes the formation of methylglyoxal from dihydroxyacetone phosphate. The protein is Methylglyoxal synthase of Thermus thermophilus (strain ATCC BAA-163 / DSM 7039 / HB27).